The primary structure comprises 406 residues: Peptidase T (406 aa).

Residue His-81 coordinates Zn(2+). Residue Asp-83 is part of the active site. Asp-142 is a Zn(2+) binding site. Glu-176 serves as the catalytic Proton acceptor. Zn(2+) is bound by residues Glu-177, Asp-199, and His-381.

Belongs to the peptidase M20B family. Zn(2+) serves as cofactor.

The protein localises to the cytoplasm. It catalyses the reaction Release of the N-terminal residue from a tripeptide.. In terms of biological role, cleaves the N-terminal amino acid of tripeptides. This chain is Peptidase T, found in Streptococcus suis (strain 98HAH33).